A 20-amino-acid polypeptide reads, in one-letter code: Astacin-like peptidase p18 (20 aa).

A Peptidase M12A domain is found at Asn1 to Asp20.

The cofactor is Zn(2+).

Active against casein. Has a role as a digestive enzyme. The protein is Astacin-like peptidase p18 of Argiope aurantia (Black-and-yellow garden spider).